The chain runs to 646 residues: bZIP transcription factor 39 (646 aa).

The Cytoplasmic segment spans residues Met-1–Lys-311. Residues His-25–Asp-172 form a disordered region. Over residues Leu-43–Asp-53 the composition is skewed to low complexity. Positions Phe-59–Ser-69 are enriched in basic and acidic residues. The span at Glu-71–Asn-98 shows a compositional bias: low complexity. The span at Glu-103–Arg-113 shows a compositional bias: basic and acidic residues. The span at Asp-159–Asp-172 shows a compositional bias: acidic residues. The bZIP domain maps to Asp-172–Leu-232. Residues Arg-174–Lys-205 form a basic motif region. A leucine-zipper region spans residues Ile-211 to Ile-218. A disordered region spans residues Leu-272–Lys-308. Positions Lys-279 to Lys-288 are enriched in low complexity. Residues Lys-291 to Ser-303 show a composition bias toward basic and acidic residues. The chain crosses the membrane as a helical span at residues Val-312 to Pro-332. At Gly-333 to Asn-646 the chain is on the lumenal side. 6 N-linked (GlcNAc...) asparagine glycosylation sites follow: Asn-371, Asn-399, Asn-525, Asn-530, Asn-565, and Asn-571. Positions Thr-560–Pro-585 are disordered. The segment covering Lys-562–Pro-585 has biased composition (polar residues).

Belongs to the bZIP family. Highly expressed in leaf blade, and at lower levels in roots, leaf sheaths, flowers and seeds.

Its subcellular location is the endoplasmic reticulum membrane. The protein resides in the nucleus. In terms of biological role, transcription factor involved in endoplasmic reticulum (ER) stress response. Acts as a ER stress sensor and activates the transcription factor BZIP50 and the chaperone BIP1. This Oryza sativa subsp. japonica (Rice) protein is bZIP transcription factor 39.